Here is a 348-residue protein sequence, read N- to C-terminus: MDTEADLFYRQLPKVELHAHLNGSVSFETMEKLIKRKPHLNIEHSMTAIRRGQRRTLDECFQVFKVIHQLVDSEEDILMVAKSVIQEFAADGVKYLELRSTPREVTETGLSKQRYIETVLEAIRQCKQEGVDIDVRFLVAVDRRHGPEVAMQTVKLAEDFLLSSDGTVVGLDLSGDPTVGHGKDLLAALQKAKNCGLKLALHLSEVPSQIDETELLLNLPPDRIGHGTFLHPDVGGSDSLVDKVCKQNIPIEICLTSNVKGQTVPSYDKHHFKYWYNRGHPCVLCTDDKGVFCTDLSQEYQLAASTFGLTKEAVWILSQQAIGYTFAPEPIKQRLEKTWAELKQQILQ.

2 residues coordinate Zn(2+): H18 and H20. Residues H20, N22, H68, 100 to 103 (STPR), D142, and G175 each bind N(6)-methyl-AMP. H202 is a binding site for Zn(2+). N(6)-methyl-AMP contacts are provided by E205, D287, and D288. E205 (proton donor) is an active-site residue. D287 contacts Zn(2+).

It belongs to the metallo-dependent hydrolases superfamily. Adenosine and AMP deaminases family. Monomer. It depends on Zn(2+) as a cofactor.

It catalyses the reaction N(6)-methyl-AMP + H2O + H(+) = IMP + methylamine. Its function is as follows. Catalyzes the hydrolysis of the free cytosolic methylated adenosine nucleotide N(6)-methyl-AMP (N6-mAMP) to produce inositol monophosphate (IMP) and methylamine. Is required for the catabolism of cytosolic N6-mAMP, which is derived from the degradation of mRNA containing N6-methylated adenine (m6A). This is N6-Methyl-AMP deaminase (mapda) from Danio rerio (Zebrafish).